Reading from the N-terminus, the 130-residue chain is Protein ApaG (130 aa).

Residues 3–127 (KAETRGISVT…FSLDSPHVRR (125 aa)) form the ApaG domain.

This chain is Protein ApaG, found in Methylobacterium radiotolerans (strain ATCC 27329 / DSM 1819 / JCM 2831 / NBRC 15690 / NCIMB 10815 / 0-1).